The sequence spans 908 residues: Protein translocase subunit SecA (908 aa).

ATP contacts are provided by residues Q90, 108-112 (GEGKT), and D503. A compositionally biased stretch (low complexity) spans 846 to 864 (AAAAEAPVAPAPQPAAAAP). The interval 846-884 (AAAAEAPVAPAPQPAAAAPQPTPELVGAEAGEPDPAAWG) is disordered. Residues C892, C894, C903, and H904 each contribute to the Zn(2+) site.

Belongs to the SecA family. In terms of assembly, monomer and homodimer. Part of the essential Sec protein translocation apparatus which comprises SecA, SecYEG and auxiliary proteins SecDF-YajC and YidC. It depends on Zn(2+) as a cofactor.

Its subcellular location is the cell inner membrane. It is found in the cytoplasm. It catalyses the reaction ATP + H2O + cellular proteinSide 1 = ADP + phosphate + cellular proteinSide 2.. In terms of biological role, part of the Sec protein translocase complex. Interacts with the SecYEG preprotein conducting channel. Has a central role in coupling the hydrolysis of ATP to the transfer of proteins into and across the cell membrane, serving both as a receptor for the preprotein-SecB complex and as an ATP-driven molecular motor driving the stepwise translocation of polypeptide chains across the membrane. The protein is Protein translocase subunit SecA of Cereibacter sphaeroides (strain ATCC 17029 / ATH 2.4.9) (Rhodobacter sphaeroides).